The following is a 262-amino-acid chain: Zinc import ATP-binding protein ZnuC (262 aa).

Positions 5–220 (IELQDICVDF…PSYLAMFGHR (216 aa)) constitute an ABC transporter domain. 37 to 44 (GPNGAGKS) contacts ATP.

The protein belongs to the ABC transporter superfamily. Zinc importer (TC 3.A.1.15.5) family. As to quaternary structure, the complex is composed of two ATP-binding proteins (ZnuC), two transmembrane proteins (ZnuB) and a solute-binding protein (ZnuA).

Its subcellular location is the cell inner membrane. It catalyses the reaction Zn(2+)(out) + ATP(in) + H2O(in) = Zn(2+)(in) + ADP(in) + phosphate(in) + H(+)(in). Part of the ABC transporter complex ZnuABC involved in zinc import. Responsible for energy coupling to the transport system. The polypeptide is Zinc import ATP-binding protein ZnuC (Vibrio cholerae serotype O1 (strain ATCC 39315 / El Tor Inaba N16961)).